We begin with the raw amino-acid sequence, 193 residues long: MFIVVEGIDGCGKSTVASLLAAEIGKKRPVFHTFEPGHVRDGLYRELIMENVDNPFVVAALFTIDRAEHVKKMIKPALAKGEWVVCERYADSTLAYQGYGMGLDKELINRMNEEAIDGLWPDKIFYLDIEPHLALARLQNKEKDALEGQGLEFLQRVREGYEEIARTRGYIYMDATLPPEIIVKRILEEVKLQ.

7-14 (GIDGCGKS) lines the ATP pocket.

The protein belongs to the thymidylate kinase family.

It carries out the reaction dTMP + ATP = dTDP + ADP. Functionally, phosphorylation of dTMP to form dTDP in both de novo and salvage pathways of dTTP synthesis. In Coprothermobacter proteolyticus (strain ATCC 35245 / DSM 5265 / OCM 4 / BT), this protein is Thymidylate kinase.